A 968-amino-acid chain; its full sequence is Alanine--tRNA ligase, cytoplasmic (968 aa).

An N-acetylmethionine modification is found at methionine 1. Phosphoserine is present on serine 3. The residue at position 19 (lysine 19) is an N6-acetyllysine. Residues arginine 77, histidine 95, tryptophan 176, and 214–216 (IWN) each bind ATP. Residues asparagine 216 and aspartate 239 each contribute to the L-alanine site. Glycine 243 serves as a coordination point for ATP. Phosphoserine is present on residues serine 399 and serine 555. Zn(2+) contacts are provided by histidine 605, histidine 609, cysteine 723, and histidine 727. Positions 750–763 (RRIVAVTGAEAQKA) match the Nuclear localization signal motif. At lysine 876 the chain carries N6-acetyllysine. Lysine 943 is modified (N6,N6,N6-trimethyllysine; alternate). Lysine 943 is subject to N6,N6-dimethyllysine; alternate. N6-methyllysine; alternate is present on lysine 943.

It belongs to the class-II aminoacyl-tRNA synthetase family. Monomer. Interacts with ANKRD16; the interaction is direct. Zn(2+) is required as a cofactor. ISGylated. Post-translationally, methylation at 'Lys-943' by METTL21C.

The protein resides in the cytoplasm. The protein localises to the nucleus. The enzyme catalyses tRNA(Ala) + L-alanine + ATP = L-alanyl-tRNA(Ala) + AMP + diphosphate. The catalysed reaction is (S)-lactate + ATP + H(+) = (S)-lactoyl-AMP + diphosphate. It carries out the reaction (S)-lactoyl-AMP + L-lysyl-[protein] = N(6)-[(S)-lactoyl]-L-lysyl-[protein] + AMP + 2 H(+). Its activity is regulated as follows. The protein lactyltransferase activity is inhibited by beta-alanine. Its function is as follows. Catalyzes the attachment of alanine to tRNA(Ala) in a two-step reaction: alanine is first activated by ATP to form Ala-AMP and then transferred to the acceptor end of tRNA(Ala). Also edits incorrectly charged tRNA(Ala) via its editing domain. In presence of high levels of lactate, also acts as a protein lactyltransferase that mediates lactylation of lysine residues in target proteins, such as TEAD1, TP53/p53 and YAP1. Protein lactylation takes place in a two-step reaction: lactate is first activated by ATP to form lactate-AMP and then transferred to lysine residues of target proteins. Acts as an inhibitor of TP53/p53 activity by catalyzing lactylation of TP53/p53. Acts as a positive regulator of the Hippo pathway by mediating lactylation of TEAD1 and YAP1. This is Alanine--tRNA ligase, cytoplasmic (Aars1) from Rattus norvegicus (Rat).